The primary structure comprises 320 residues: Thymidylate synthase (320 aa).

DUMP-binding positions include arginine 27 and 182 to 183 (RR). The active-site Nucleophile is cysteine 202. DUMP-binding positions include 222–225 (RSAD), asparagine 233, and 263–265 (HIY). Aspartate 225 serves as a coordination point for (6R)-5,10-methylene-5,6,7,8-tetrahydrofolate. Position 319 (alanine 319) interacts with (6R)-5,10-methylene-5,6,7,8-tetrahydrofolate.

It belongs to the thymidylate synthase family. Bacterial-type ThyA subfamily. Homodimer.

The protein localises to the cytoplasm. The catalysed reaction is dUMP + (6R)-5,10-methylene-5,6,7,8-tetrahydrofolate = 7,8-dihydrofolate + dTMP. The protein operates within pyrimidine metabolism; dTTP biosynthesis. Functionally, catalyzes the reductive methylation of 2'-deoxyuridine-5'-monophosphate (dUMP) to 2'-deoxythymidine-5'-monophosphate (dTMP) while utilizing 5,10-methylenetetrahydrofolate (mTHF) as the methyl donor and reductant in the reaction, yielding dihydrofolate (DHF) as a by-product. This enzymatic reaction provides an intracellular de novo source of dTMP, an essential precursor for DNA biosynthesis. In Limosilactobacillus reuteri (strain DSM 20016) (Lactobacillus reuteri), this protein is Thymidylate synthase.